The chain runs to 208 residues: Proheparin-binding EGF-like growth factor (208 aa).

Residues 1 to 19 form the signal peptide; sequence MKLLPSVVLKLLLAAVLSA. Residues 20 to 62 constitute a propeptide that is removed on maturation; the sequence is LVTGESLEQLRRGLAAGTSNPDPSTGSTDQLLRLGGGRDRKVR. The Extracellular segment spans residues 20-160; that stretch reads LVTGESLEQL…ENRLYTYDHT (141 aa). The segment at 34–55 is disordered; sequence AAGTSNPDPSTGSTDQLLRLGG. Residues 36 to 49 are compositionally biased toward polar residues; sequence GTSNPDPSTGSTDQ. O-linked (GalNAc...) threonine glycans are attached at residues Thr75 and Thr85. A disordered region spans residues 81–104; it reads QALATPSKEEHGKRKKKGKGLGKK. Over residues 93 to 102 the composition is skewed to basic residues; sequence KRKKKGKGLG. Residues 104 to 144 form the EGF-like domain; the sequence is KRDPCLRKYKDFCIHGECKYVKELRAPSCICHPGYHGERCH. 3 disulfide bridges follow: Cys108–Cys121, Cys116–Cys132, and Cys134–Cys143. Positions 136 to 148 are toxin-binding domain; it reads PGYHGERCHGLSL. Residues 149 to 208 constitute a propeptide, C-terminal; sequence PVENRLYTYDHTTILAVVAVVLSSVCLLVIVGLLMFRYHRRGGYDVENEEKVKLGMTNSH. The helical transmembrane segment at 161 to 184 threads the bilayer; that stretch reads TILAVVAVVLSSVCLLVIVGLLMF. Topologically, residues 185-208 are cytoplasmic; that stretch reads RYHRRGGYDVENEEKVKLGMTNSH.

Interacts with EGFR and ERBB4. Interacts with FBLN1. O-glycosylated.

Its subcellular location is the secreted. It is found in the extracellular space. It localises to the cell membrane. Functionally, growth factor that mediates its effects via EGFR, ERBB2 and ERBB4. Required for normal cardiac valve formation and normal heart function. Promotes smooth muscle cell proliferation. May be involved in macrophage-mediated cellular proliferation. It is mitogenic for fibroblasts, but not endothelial cells. It is able to bind EGF receptor/EGFR with higher affinity than EGF itself and is a far more potent mitogen for smooth muscle cells than EGF. Also acts as a diphtheria toxin receptor. The polypeptide is Proheparin-binding EGF-like growth factor (HBEGF) (Chlorocebus aethiops (Green monkey)).